A 141-amino-acid polypeptide reads, in one-letter code: MKFISKVHGEITYDEKNIIIFNKGILGFDELKRFILIELEEYEPFKLLHSLEDDGVGLIVTSPYDFFEDYELKLSEDIINNLKIEMPKDVMVITTITLNSEAKKITTNLQGPIIINISNNLGEQIILDNSKYKIKQPLIGE.

Belongs to the FliW family. Interacts with translational regulator CsrA and flagellin(s).

The protein resides in the cytoplasm. In terms of biological role, acts as an anti-CsrA protein, binds CsrA and prevents it from repressing translation of its target genes, one of which is flagellin. Binds to flagellin and participates in the assembly of the flagellum. This Clostridium beijerinckii (strain ATCC 51743 / NCIMB 8052) (Clostridium acetobutylicum) protein is Flagellar assembly factor FliW.